The chain runs to 209 residues: V-type ATP synthase subunit D 2 (209 aa).

The protein belongs to the V-ATPase D subunit family.

Functionally, produces ATP from ADP in the presence of a proton gradient across the membrane. The protein is V-type ATP synthase subunit D 2 (atpD2) of Treponema pallidum (strain Nichols).